The primary structure comprises 381 residues: Homoserine O-succinyltransferase (381 aa).

One can recognise an AB hydrolase-1 domain in the interval 45-360 (NAVLVCHALN…PHGHDAFLLD (316 aa)). The Nucleophile role is filled by Ser-151. Position 221 (Arg-221) interacts with substrate. Active-site residues include Asp-321 and His-354. Position 355 (Asp-355) interacts with substrate.

It belongs to the AB hydrolase superfamily. MetX family. In terms of assembly, homodimer.

The protein localises to the cytoplasm. It catalyses the reaction L-homoserine + succinyl-CoA = O-succinyl-L-homoserine + CoA. It participates in amino-acid biosynthesis; L-methionine biosynthesis via de novo pathway; O-succinyl-L-homoserine from L-homoserine: step 1/1. Its function is as follows. Transfers a succinyl group from succinyl-CoA to L-homoserine, forming succinyl-L-homoserine. This is Homoserine O-succinyltransferase from Burkholderia ambifaria (strain MC40-6).